Here is a 743-residue protein sequence, read N- to C-terminus: Isocitrate dehydrogenase [NADP] 2 (743 aa).

Positions 87 and 89 each coordinate NADP(+). Residues S134, N137, R141, R147, and K257 each coordinate D-threo-isocitrate. NADP(+) is bound at residue N137. Position 352 (D352) interacts with Mg(2+). The D-threo-isocitrate site is built by Y422 and R549. Mg(2+) contacts are provided by D550 and D554. Residues S587, H591, R602, D604, and R651 each coordinate NADP(+).

Belongs to the monomeric-type IDH family. In terms of assembly, monomer. The cofactor is Mg(2+). Mn(2+) is required as a cofactor.

It carries out the reaction D-threo-isocitrate + NADP(+) = 2-oxoglutarate + CO2 + NADPH. In terms of biological role, catalyzes the oxidative decarboxylation of isocitrate to 2-oxoglutarate and carbon dioxide with the concomitant reduction of NADP(+). This is Isocitrate dehydrogenase [NADP] 2 (icd2) from Colwellia maris.